The sequence spans 110 residues: Hydrogenase maturation factor HypA (110 aa).

A Ni(2+)-binding site is contributed by histidine 2. Residues cysteine 70, cysteine 73, cysteine 86, and cysteine 89 each contribute to the Zn(2+) site.

Belongs to the HypA/HybF family.

Functionally, involved in the maturation of [NiFe] hydrogenases. Required for nickel insertion into the metal center of the hydrogenase. This is Hydrogenase maturation factor HypA from Geotalea uraniireducens (strain Rf4) (Geobacter uraniireducens).